The sequence spans 428 residues: C4-dicarboxylate transport protein (428 aa).

Helical transmembrane passes span Val8 to Pro28, Leu44 to Met64, Leu78 to Ile98, Gly148 to Gly168, Val184 to Met204, Leu222 to Ala242, Ile307 to Met327, and Ala355 to Ile375.

It belongs to the dicarboxylate/amino acid:cation symporter (DAACS) (TC 2.A.23) family.

The protein resides in the cell inner membrane. Responsible for the transport of dicarboxylates such as succinate, fumarate, and malate from the periplasm across the membrane. The sequence is that of C4-dicarboxylate transport protein from Burkholderia thailandensis (strain ATCC 700388 / DSM 13276 / CCUG 48851 / CIP 106301 / E264).